Here is a 203-residue protein sequence, read N- to C-terminus: Dephospho-CoA kinase (203 aa).

A DPCK domain is found at 6–203 (RLGITGGIAC…SLLGRGGKGG (198 aa)). 14–19 (ACGKSV) provides a ligand contact to ATP.

The protein belongs to the CoaE family.

It localises to the cytoplasm. The enzyme catalyses 3'-dephospho-CoA + ATP = ADP + CoA + H(+). Its pathway is cofactor biosynthesis; coenzyme A biosynthesis; CoA from (R)-pantothenate: step 5/5. Its function is as follows. Catalyzes the phosphorylation of the 3'-hydroxyl group of dephosphocoenzyme A to form coenzyme A. In Thermosynechococcus vestitus (strain NIES-2133 / IAM M-273 / BP-1), this protein is Dephospho-CoA kinase.